We begin with the raw amino-acid sequence, 353 residues long: GDSL esterase/lipase APG (353 aa).

The signal sequence occupies residues 1-25; the sequence is MDRCTSSFLLLTLVSTLSILQISFA. Serine 37 acts as the Nucleophile in catalysis. 2 N-linked (GlcNAc...) asparagine glycosylation sites follow: asparagine 197 and asparagine 320. Catalysis depends on residues aspartate 328 and histidine 331.

Belongs to the 'GDSL' lipolytic enzyme family.

Its subcellular location is the secreted. The polypeptide is GDSL esterase/lipase APG (APG) (Arabidopsis thaliana (Mouse-ear cress)).